The following is an 81-amino-acid chain: Penaeidin-3c (81 aa).

The first 19 residues, 1–19 (MRLVVCLVFLASFALVCQG), serve as a signal peptide directing secretion. Glutamine 20 carries the pyrrolidone carboxylic acid modification. 3 disulfide bridges follow: cysteine 50–cysteine 65, cysteine 54–cysteine 72, and cysteine 66–cysteine 73. Position 80 is a serine amide (serine 80).

The protein belongs to the penaeidin family. As to expression, higher expression in hemocytes and to a lesser extent in heart, testis, gills, intestine, lymphoid organ and hepatopancreas. Traces in eyes and subcuticular epithelium. Not present in the brain.

It localises to the cytoplasmic granule. Antibacterial activity against M.luteus and E.coli bacteria. Antifungal activity against N.crassa and F.oxysporum. Presents chitin-binding activity. The sequence is that of Penaeidin-3c from Penaeus vannamei (Whiteleg shrimp).